A 394-amino-acid chain; its full sequence is Alanine--glyoxylate aminotransferase (394 aa).

Residues 76-78, Ser153, and Gln204 each bind pyridoxal 5'-phosphate; that span reads AGH. Ser153 serves as a coordination point for substrate. Residue Lys205 is modified to N6-(pyridoxal phosphate)lysine. Pyridoxal 5'-phosphate contacts are provided by Tyr256 and Thr259. Residue Arg356 coordinates substrate.

Belongs to the class-V pyridoxal-phosphate-dependent aminotransferase family. In terms of assembly, homodimer. Pyridoxal 5'-phosphate serves as cofactor.

The protein resides in the peroxisome. It catalyses the reaction glyoxylate + L-alanine = glycine + pyruvate. It carries out the reaction (2S)-2-aminobutanoate + glyoxylate = 2-oxobutanoate + glycine. The enzyme catalyses glyoxylate + L-phenylalanine = 3-phenylpyruvate + glycine. The catalysed reaction is glyoxylate + L-serine = 3-hydroxypyruvate + glycine. It catalyses the reaction 2-oxobutanoate + L-alanine = (2S)-2-aminobutanoate + pyruvate. It carries out the reaction L-phenylalanine + pyruvate = 3-phenylpyruvate + L-alanine. The enzyme catalyses L-serine + pyruvate = 3-hydroxypyruvate + L-alanine. Its function is as follows. Catalyzes the pyridoxal 5'-phosphate-dependent transamination of alanine with glyoxylate as an amino group acceptor. Can also catalyze, although with much less efficiency, the transamination of amino-butyrate, phenylalanine and serine with glyoxylate or pyruvate as an amino group acceptor. Does not catalyze the transamination of both 3-hydroxykynurenine and L-kynurenine. May play a role in the detoxification of glyoxylate, a toxic plant metabolite from the fly diet. The protein is Alanine--glyoxylate aminotransferase of Drosophila melanogaster (Fruit fly).